A 547-amino-acid chain; its full sequence is Chaperonin GroEL 1 (547 aa).

Residues 30-33, Lys-51, 87-91, Gly-415, and Asp-495 each bind ATP; these read TLGP and DGTTT.

This sequence belongs to the chaperonin (HSP60) family. As to quaternary structure, forms a cylinder of 14 subunits composed of two heptameric rings stacked back-to-back. Interacts with the co-chaperonin GroES.

The protein localises to the cytoplasm. The catalysed reaction is ATP + H2O + a folded polypeptide = ADP + phosphate + an unfolded polypeptide.. Together with its co-chaperonin GroES, plays an essential role in assisting protein folding. The GroEL-GroES system forms a nano-cage that allows encapsulation of the non-native substrate proteins and provides a physical environment optimized to promote and accelerate protein folding. This chain is Chaperonin GroEL 1, found in Rhizobium johnstonii (strain DSM 114642 / LMG 32736 / 3841) (Rhizobium leguminosarum bv. viciae).